Reading from the N-terminus, the 455-residue chain is MREVISVHVGQAGVQIGNACWELYCLEHGIGPDGFPTENSEVHKNNSYLNDGFGTFFSETGQGKFVPRSIYVDLEPNVIDQVRTGPYKDLFHPEQMVTGKEDASNNYARGHYTVGKEMIDSVLERIRRMADNCSGLQGFLVFHSFGGGTGSGLGALLLERLNMEYGKKSNLQFSVYPAPQVSTSVVEPYNSVLTTHATLDNSDCTFMVDNEACYDICRRNLDIERPTYENLNRLIAQVVSSITASLRFAGSLNVDLNEFQTNLVPYPRIHFPLVTYSPIVSAAKAFHESNSVQEITNQCFEPYNQMVKCDPRTGRYMATCLLYRGDVIPRDVQAAVTSIKSRRTIQFVDWCPTGFKIGICYEPPQHVPGSGIAKVNRAVCMLSNTTSIAEAWSRLDHKFDLMYSKRAFVHWYVGEGMEEGEFSEAREDLAALERDYEEVGQDSMDNEMYEADEEY.

GTP contacts are provided by Gln11, Glu75, Ser144, Gly148, Thr149, Thr183, Asn210, and Asn232. Glu75 contributes to the Mg(2+) binding site. Glu258 is a catalytic residue.

It belongs to the tubulin family. Dimer of alpha and beta chains. A typical microtubule is a hollow water-filled tube with an outer diameter of 25 nm and an inner diameter of 15 nM. Alpha-beta heterodimers associate head-to-tail to form protofilaments running lengthwise along the microtubule wall with the beta-tubulin subunit facing the microtubule plus end conferring a structural polarity. Microtubules usually have 13 protofilaments but different protofilament numbers can be found in some organisms and specialized cells. Mg(2+) is required as a cofactor.

It is found in the cytoplasm. Its subcellular location is the cytoskeleton. It carries out the reaction GTP + H2O = GDP + phosphate + H(+). Tubulin is the major constituent of microtubules, a cylinder consisting of laterally associated linear protofilaments composed of alpha- and beta-tubulin heterodimers. Microtubules grow by the addition of GTP-tubulin dimers to the microtubule end, where a stabilizing cap forms. Below the cap, tubulin dimers are in GDP-bound state, owing to GTPase activity of alpha-tubulin. The protein is Tubulin alpha-1 chain (nda2) of Schizosaccharomyces pombe (strain 972 / ATCC 24843) (Fission yeast).